The primary structure comprises 302 residues: Rhomboid-related protein 2 (302 aa).

Positions 1 to 38 (MAVAHEMEMESVNLNMEREGKEEPEEEKMKGNGEGKDF) are disordered. A compositionally biased stretch (basic and acidic residues) spans 16-38 (MEREGKEEPEEEKMKGNGEGKDF). 7 helical membrane-spanning segments follow: residues 71-91 (PLFIILISLAELAVFIYYAVW), 127-147 (LVHAGVQHIVGNLLMQIVLGI), 158-178 (VGLVYLAGVLAGSLASSIFDP), 182-202 (LVGASGGVYALMGGYFMNVIV), 211-231 (FGIVRLLVIILIVASDMGFAL), 244-264 (VSFAAHIAGGFAGMSIGYTVF), and 277-297 (FWIAIAAYVACLLFAVFFNIF). Residue Ser-186 is the Nucleophile of the active site. Residue His-249 is part of the active site.

It belongs to the peptidase S54 family. Proteolytic processing of the proenzyme produces an N- and a C-terminal fragment. The processing is required for activation of the protease.

It is found in the cell membrane. The catalysed reaction is Cleaves type-1 transmembrane domains using a catalytic dyad composed of serine and histidine that are contributed by different transmembrane domains.. Functionally, involved in regulated intramembrane proteolysis and the subsequent release of functional polypeptides from their membrane anchors. Known substrate: EFNB3. In Mus musculus (Mouse), this protein is Rhomboid-related protein 2 (Rhbdl2).